We begin with the raw amino-acid sequence, 687 residues long: Homoaconitase, mitochondrial (687 aa).

Residues 1-18 (MFAFRNRAVTQTLLVRRY) constitute a mitochondrion transit peptide. Residues cysteine 340, cysteine 400, and cysteine 403 each contribute to the [4Fe-4S] cluster site. The segment covering 481–490 (EAEADAEAAE) has biased composition (acidic residues). Residues 481–500 (EAEADAEAAESDPAPSGGVL) are disordered.

It belongs to the aconitase/IPM isomerase family. It depends on [4Fe-4S] cluster as a cofactor.

The protein resides in the mitochondrion. The catalysed reaction is (2R,3S)-homoisocitrate = cis-homoaconitate + H2O. It participates in amino-acid biosynthesis; L-lysine biosynthesis via AAA pathway; L-alpha-aminoadipate from 2-oxoglutarate: step 3/5. Its function is as follows. Catalyzes the reversible hydration of cis-homoaconitate to (2R,3S)-homoisocitrate, a step in the alpha-aminoadipate pathway for lysine biosynthesis. The chain is Homoaconitase, mitochondrial (LYS4) from Yarrowia lipolytica (strain CLIB 122 / E 150) (Yeast).